The following is a 738-amino-acid chain: YTH domain-containing protein 1 (738 aa).

Over residues 1 to 12 the composition is skewed to basic and acidic residues; sequence MAADSREEKDGE. The disordered stretch occupies residues 1-341; that stretch reads MAADSREEKD…KHEKLSSSVR (341 aa). Ser-35 carries the post-translational modification Phosphoserine. A compositionally biased stretch (basic and acidic residues) spans 50–59; the sequence is ERMESIDTKR. Residues 63–90 are compositionally biased toward polar residues; sequence SIHSRQLISKPLSSSVSNNKRIVSTKGK. Over residues 91–115 the composition is skewed to basic and acidic residues; that stretch reads SVTEYKNEEYQRSERNKRLDADRKI. A Glycyl lysine isopeptide (Lys-Gly) (interchain with G-Cter in SUMO2) cross-link involves residue Lys-96. A phosphoserine mark is found at Ser-118 and Ser-120. Positions 124–144 are enriched in basic and acidic residues; that stretch reads EPYKSQPEKPCLRKRDSERRA. Ser-146 carries the phosphoserine modification. A Phosphothreonine modification is found at Thr-148. Basic and acidic residues-rich tracts occupy residues 151-163 and 170-185; these read GSER…DRRA and SKEE…DHET. Over residues 186-197 the composition is skewed to polar residues; that stretch reads GSSASSEQGNNT. Acidic residues predominate over residues 198-257; sequence ENEEEGGEEDVEEDEEVDEDGDDDEEVDEDAEEEEDEEEDEEEEDEEEEEEEEEEYEQDE. The segment covering 258-273 has biased composition (basic and acidic residues); it reads RDQKEEGNDYDTRSEA. Over residues 283–292 the composition is skewed to polar residues; it reads FTDGSVRSGS. A phosphoserine mark is found at Ser-311, Ser-318, Ser-320, Ser-321, and Ser-323. Low complexity predominate over residues 318–328; it reads SGSSASESYAG. Positions 358 to 495 constitute a YTH domain; the sequence is ARFFLIKSNN…ECGTQLCLLF (138 aa). RNA contacts are provided by residues 364 to 366 and Trp-380; that span reads KSN. Ser-427 carries the phosphoserine modification. Trp-431 is an RNA binding site. The residue at position 438 (Ser-438) is a Phosphoserine. Asp-479 serves as a coordination point for RNA. Residues 512 to 526 show a composition bias toward basic residues; that stretch reads HKRRMHSQPRSRGRP. Disordered stretches follow at residues 512 to 566, 618 to 654, and 680 to 738; these read HKRR…RPGY, GMPP…HPVP, and AVVS…RYRR. The span at 527–566 shows a compositional bias: basic and acidic residues; it reads SRREPVRDVGRRRPEDYDIHNSRKKPRIDYPPEFHQRPGY. The residue at position 548 (Ser-548) is a Phosphoserine. The span at 690–738 shows a compositional bias: basic and acidic residues; it reads RERDRERERDRPRDNRRDRERDRGRDRERERERICDRDRDRGERGRYRR.

Interacts with SRSF1. Interacts with SRSF2. Interacts with SRSF3. Interacts with SRSF7. Interacts with SRSF10. Interacts with CPSF6. Interacts with KHDRBS1/SAM68. Interacts with TRA2B. Interacts with KHDRBS3. Interacts with EMD. Interacts with RBMX. Interacts with ZCCHC8. Tyrosine phosphorylated. As to expression, ubiquitous.

It localises to the nucleus. The protein resides in the nucleus speckle. Its function is as follows. Regulator of alternative splicing that specifically recognizes and binds N6-methyladenosine (m6A)-containing RNAs. M6A is a modification present at internal sites of mRNAs and some non-coding RNAs and plays a role in the efficiency of mRNA splicing, processing and stability. Acts as a key regulator of exon-inclusion or exon-skipping during alternative splicing via interaction with mRNA splicing factors SRSF3 and SRSF10. Specifically binds m6A-containing mRNAs and promotes recruitment of SRSF3 to its mRNA-binding elements adjacent to m6A sites, leading to exon-inclusion during alternative splicing. In contrast, interaction with SRSF3 prevents interaction with SRSF10, a splicing factor that promotes exon skipping: this prevents SRSF10 from binding to its mRNA-binding sites close to m6A-containing regions, leading to inhibit exon skipping during alternative splicing. May also regulate alternative splice site selection. Also involved in nuclear export of m6A-containing mRNAs via interaction with SRSF3: interaction with SRSF3 facilitates m6A-containing mRNA-binding to both SRSF3 and NXF1, promoting mRNA nuclear export. Involved in S-adenosyl-L-methionine homeostasis by regulating expression of MAT2A transcripts, probably by binding m6A-containing MAT2A mRNAs. Also recognizes and binds m6A on other RNA molecules. Involved in random X inactivation mediated by Xist RNA: recognizes and binds m6A-containing Xist and promotes transcription repression activity of Xist. Also recognizes and binds m6A-containing single-stranded DNA. Involved in germline development: required for spermatogonial development in males and oocyte growth and maturation in females, probably via its role in alternative splicing. In Rattus norvegicus (Rat), this protein is YTH domain-containing protein 1 (Ythdc1).